Here is a 280-residue protein sequence, read N- to C-terminus: Pantothenate synthetase (280 aa).

30-37 (MGYLHEGH) serves as a coordination point for ATP. Catalysis depends on His37, which acts as the Proton donor. Residue Gln61 participates in (R)-pantoate binding. Gln61 lines the beta-alanine pocket. 147–150 (GQKD) is a binding site for ATP. Gln153 is a binding site for (R)-pantoate. Residues Val176 and 184–187 (MSSR) each bind ATP.

It belongs to the pantothenate synthetase family. As to quaternary structure, homodimer.

It localises to the cytoplasm. The enzyme catalyses (R)-pantoate + beta-alanine + ATP = (R)-pantothenate + AMP + diphosphate + H(+). It functions in the pathway cofactor biosynthesis; (R)-pantothenate biosynthesis; (R)-pantothenate from (R)-pantoate and beta-alanine: step 1/1. In terms of biological role, catalyzes the condensation of pantoate with beta-alanine in an ATP-dependent reaction via a pantoyl-adenylate intermediate. This chain is Pantothenate synthetase, found in Thermosipho melanesiensis (strain DSM 12029 / CIP 104789 / BI429).